A 175-amino-acid chain; its full sequence is Large ribosomal subunit protein uL10 (175 aa).

Belongs to the universal ribosomal protein uL10 family. In terms of assembly, part of the ribosomal stalk of the 50S ribosomal subunit. The N-terminus interacts with L11 and the large rRNA to form the base of the stalk. The C-terminus forms an elongated spine to which L12 dimers bind in a sequential fashion forming a multimeric L10(L12)X complex.

Forms part of the ribosomal stalk, playing a central role in the interaction of the ribosome with GTP-bound translation factors. In Picosynechococcus sp. (strain ATCC 27264 / PCC 7002 / PR-6) (Agmenellum quadruplicatum), this protein is Large ribosomal subunit protein uL10.